The chain runs to 149 residues: Secreted RxLR effector protein 17 (149 aa).

Residues 1–24 (MRLFYFSAMSVIGLLARNNMVVVA) form the signal peptide. The RxLR-dEER signature appears at 52-78 (RSLRTREKDIQDSTVAKDDAIKVEEDR).

The protein belongs to the RxLR effector family.

It localises to the secreted. Its subcellular location is the host cytoplasm. It is found in the host nucleus. Effector that acts as a broad suppressor of cell death to interrupt plant immunity. Inhibits cell death induced by cell death-inducing proteins, including the PAMP elicitor INF1 from P.infestans. The polypeptide is Secreted RxLR effector protein 17 (Plasmopara viticola (Downy mildew of grapevine)).